A 514-amino-acid chain; its full sequence is Histidine ammonia-lyase (514 aa).

Residues 144–146 (ASG) constitute a cross-link (5-imidazolinone (Ala-Gly)). 2,3-didehydroalanine (Ser) is present on S145.

This sequence belongs to the PAL/histidase family. Post-translationally, contains an active site 4-methylidene-imidazol-5-one (MIO), which is formed autocatalytically by cyclization and dehydration of residues Ala-Ser-Gly.

The protein localises to the cytoplasm. It catalyses the reaction L-histidine = trans-urocanate + NH4(+). It participates in amino-acid degradation; L-histidine degradation into L-glutamate; N-formimidoyl-L-glutamate from L-histidine: step 1/3. This chain is Histidine ammonia-lyase, found in Rhodospirillum rubrum (strain ATCC 11170 / ATH 1.1.1 / DSM 467 / LMG 4362 / NCIMB 8255 / S1).